The chain runs to 132 residues: Hemoglobin heart muscle subunit alpha-type (132 aa).

Residues 1 to 132 (GLSDSEKSAV…GEVGAILTSS (132 aa)) form the Globin domain. Residues H58 and H83 each contribute to the heme b site.

Belongs to the globin family. In terms of assembly, monomer.

In terms of biological role, this hemoglobin may replace myocardial myoglobin in this amphibian species. The chain is Hemoglobin heart muscle subunit alpha-type from Aquarana catesbeiana (American bullfrog).